The primary structure comprises 277 residues: UPF0276 protein PP_0992 (277 aa).

Belongs to the UPF0276 family.

This Pseudomonas putida (strain ATCC 47054 / DSM 6125 / CFBP 8728 / NCIMB 11950 / KT2440) protein is UPF0276 protein PP_0992.